A 397-amino-acid chain; its full sequence is Enoyl-[acyl-carrier-protein] reductase [NADH] (397 aa).

NAD(+)-binding positions include 47-52 (GASTGY), 73-74 (LE), 110-111 (DA), and 138-139 (LA). Tyr224 is a substrate binding site. Catalysis depends on Tyr234, which acts as the Proton donor. NAD(+) contacts are provided by residues Lys243 and 272–274 (LVT).

Belongs to the TER reductase family. In terms of assembly, monomer.

The catalysed reaction is a 2,3-saturated acyl-[ACP] + NAD(+) = a (2E)-enoyl-[ACP] + NADH + H(+). Its pathway is lipid metabolism; fatty acid biosynthesis. In terms of biological role, involved in the final reduction of the elongation cycle of fatty acid synthesis (FAS II). Catalyzes the reduction of a carbon-carbon double bond in an enoyl moiety that is covalently linked to an acyl carrier protein (ACP). This is Enoyl-[acyl-carrier-protein] reductase [NADH] from Methylobacillus flagellatus (strain ATCC 51484 / DSM 6875 / VKM B-1610 / KT).